The sequence spans 101 residues: Protein RnfH (101 aa).

It belongs to the UPF0125 (RnfH) family.

The chain is Protein RnfH from Coxiella burnetii (strain CbuG_Q212) (Coxiella burnetii (strain Q212)).